A 346-amino-acid chain; its full sequence is UDP-3-O-acylglucosamine N-acyltransferase (346 aa).

The Proton acceptor role is filled by H240.

This sequence belongs to the transferase hexapeptide repeat family. LpxD subfamily. Homotrimer.

It carries out the reaction a UDP-3-O-[(3R)-3-hydroxyacyl]-alpha-D-glucosamine + a (3R)-hydroxyacyl-[ACP] = a UDP-2-N,3-O-bis[(3R)-3-hydroxyacyl]-alpha-D-glucosamine + holo-[ACP] + H(+). Its pathway is bacterial outer membrane biogenesis; LPS lipid A biosynthesis. Its function is as follows. Catalyzes the N-acylation of UDP-3-O-acylglucosamine using 3-hydroxyacyl-ACP as the acyl donor. Is involved in the biosynthesis of lipid A, a phosphorylated glycolipid that anchors the lipopolysaccharide to the outer membrane of the cell. The polypeptide is UDP-3-O-acylglucosamine N-acyltransferase (Bacteroides thetaiotaomicron (strain ATCC 29148 / DSM 2079 / JCM 5827 / CCUG 10774 / NCTC 10582 / VPI-5482 / E50)).